Reading from the N-terminus, the 672-residue chain is tRNA 5-methylaminomethyl-2-thiouridine biosynthesis bifunctional protein MnmC (672 aa).

Residues 1–243 (MTSITHAELG…KREMIAGCME (243 aa)) are tRNA (mnm(5)s(2)U34)-methyltransferase. Residues 269–672 (IGGGIASAAL…LRKGKAITEL (404 aa)) form an FAD-dependent cmnm(5)s(2)U34 oxidoreductase region.

It in the N-terminal section; belongs to the methyltransferase superfamily. tRNA (mnm(5)s(2)U34)-methyltransferase family. In the C-terminal section; belongs to the DAO family. It depends on FAD as a cofactor.

It localises to the cytoplasm. It carries out the reaction 5-aminomethyl-2-thiouridine(34) in tRNA + S-adenosyl-L-methionine = 5-methylaminomethyl-2-thiouridine(34) in tRNA + S-adenosyl-L-homocysteine + H(+). In terms of biological role, catalyzes the last two steps in the biosynthesis of 5-methylaminomethyl-2-thiouridine (mnm(5)s(2)U) at the wobble position (U34) in tRNA. Catalyzes the FAD-dependent demodification of cmnm(5)s(2)U34 to nm(5)s(2)U34, followed by the transfer of a methyl group from S-adenosyl-L-methionine to nm(5)s(2)U34, to form mnm(5)s(2)U34. This Vibrio vulnificus (strain CMCP6) protein is tRNA 5-methylaminomethyl-2-thiouridine biosynthesis bifunctional protein MnmC.